Here is a 717-residue protein sequence, read N- to C-terminus: Fatty acid oxidation complex subunit alpha (717 aa).

The enoyl-CoA hydratase/isomerase stretch occupies residues Met-1 to Ala-189. Asp-296 serves as a coordination point for substrate. The interval Lys-311–Ala-717 is 3-hydroxyacyl-CoA dehydrogenase. NAD(+)-binding positions include Met-324, Asp-343, Val-400–Glu-402, Lys-407, and Ser-429. The For 3-hydroxyacyl-CoA dehydrogenase activity role is filled by His-450. NAD(+) is bound at residue Asn-453. 2 residues coordinate substrate: Asn-500 and Tyr-660.

It in the N-terminal section; belongs to the enoyl-CoA hydratase/isomerase family. In the C-terminal section; belongs to the 3-hydroxyacyl-CoA dehydrogenase family. Heterotetramer of two alpha chains (FadB) and two beta chains (FadA).

The enzyme catalyses a (3S)-3-hydroxyacyl-CoA + NAD(+) = a 3-oxoacyl-CoA + NADH + H(+). It catalyses the reaction a (3S)-3-hydroxyacyl-CoA = a (2E)-enoyl-CoA + H2O. The catalysed reaction is a 4-saturated-(3S)-3-hydroxyacyl-CoA = a (3E)-enoyl-CoA + H2O. It carries out the reaction (3S)-3-hydroxybutanoyl-CoA = (3R)-3-hydroxybutanoyl-CoA. The enzyme catalyses a (3Z)-enoyl-CoA = a 4-saturated (2E)-enoyl-CoA. It catalyses the reaction a (3E)-enoyl-CoA = a 4-saturated (2E)-enoyl-CoA. It participates in lipid metabolism; fatty acid beta-oxidation. Functionally, involved in the aerobic and anaerobic degradation of long-chain fatty acids via beta-oxidation cycle. Catalyzes the formation of 3-oxoacyl-CoA from enoyl-CoA via L-3-hydroxyacyl-CoA. It can also use D-3-hydroxyacyl-CoA and cis-3-enoyl-CoA as substrate. The polypeptide is Fatty acid oxidation complex subunit alpha (Shewanella halifaxensis (strain HAW-EB4)).